The primary structure comprises 179 residues: Lebocin-3 (179 aa).

A signal peptide spans 1–16 (MYKFLVFSSVLVLFFA). The propeptide occupies 17–120 (QASCQRFIQP…QPIESHRNTR (104 aa)). Threonine 135 carries O-linked (GalNAc...) threonine glycosylation. The propeptide occupies 153 to 179 (RRHASEDQEELRQYNEHFLIPRDIFQE).

This sequence belongs to the lebocin family. Post-translationally, O-glycosylation is important for the antibacterial activity of lebocin. Hemolymph. Produced in fat body.

It localises to the secreted. Its function is as follows. Antibacterial peptide. In Bombyx mori (Silk moth), this protein is Lebocin-3 (LEB3).